A 446-amino-acid polypeptide reads, in one-letter code: 3-phosphoshikimate 1-carboxyvinyltransferase (446 aa).

K26, S27, and R31 together coordinate 3-phosphoshikimate. K26 contacts phosphoenolpyruvate. 2 residues coordinate phosphoenolpyruvate: G100 and R128. S171, S172, Q173, S200, E315, and H344 together coordinate 3-phosphoshikimate. Q173 serves as a coordination point for phosphoenolpyruvate. The active-site Proton acceptor is the E315. R348, R389, and K414 together coordinate phosphoenolpyruvate.

The protein belongs to the EPSP synthase family. In terms of assembly, monomer.

It localises to the cytoplasm. The enzyme catalyses 3-phosphoshikimate + phosphoenolpyruvate = 5-O-(1-carboxyvinyl)-3-phosphoshikimate + phosphate. It functions in the pathway metabolic intermediate biosynthesis; chorismate biosynthesis; chorismate from D-erythrose 4-phosphate and phosphoenolpyruvate: step 6/7. Catalyzes the transfer of the enolpyruvyl moiety of phosphoenolpyruvate (PEP) to the 5-hydroxyl of shikimate-3-phosphate (S3P) to produce enolpyruvyl shikimate-3-phosphate and inorganic phosphate. In Mycolicibacterium gilvum (strain PYR-GCK) (Mycobacterium gilvum (strain PYR-GCK)), this protein is 3-phosphoshikimate 1-carboxyvinyltransferase.